Here is a 626-residue protein sequence, read N- to C-terminus: DEAD-box ATP-dependent RNA helicase 16 (626 aa).

The disordered stretch occupies residues Met-1–Phe-48. Residues Val-9 to Ser-47 adopt a coiled-coil conformation. Residues Val-12–Glu-27 show a composition bias toward acidic residues. Positions Lys-46–Gln-74 match the Q motif motif. The 183-residue stretch at Ile-77 to Leu-259 folds into the Helicase ATP-binding domain. An ATP-binding site is contributed by Ala-90 to Thr-97. Positions Asp-207–Asp-210 match the DEAD box motif. One can recognise a Helicase C-terminal domain in the interval Ala-293–Val-477. Residues Ile-356 to Arg-385 adopt a coiled-coil conformation. Positions Gln-363–Lys-381 are enriched in basic and acidic residues. Disordered stretches follow at residues Gln-363–Pro-388 and Ala-568–Val-626.

Belongs to the DEAD box helicase family. DDX56/DBP9 subfamily.

It catalyses the reaction ATP + H2O = ADP + phosphate + H(+). In Arabidopsis thaliana (Mouse-ear cress), this protein is DEAD-box ATP-dependent RNA helicase 16 (RH16).